The chain runs to 201 residues: 3-isopropylmalate dehydratase small subunit (201 aa).

It belongs to the LeuD family. LeuD type 1 subfamily. Heterodimer of LeuC and LeuD.

It catalyses the reaction (2R,3S)-3-isopropylmalate = (2S)-2-isopropylmalate. The protein operates within amino-acid biosynthesis; L-leucine biosynthesis; L-leucine from 3-methyl-2-oxobutanoate: step 2/4. Functionally, catalyzes the isomerization between 2-isopropylmalate and 3-isopropylmalate, via the formation of 2-isopropylmaleate. This is 3-isopropylmalate dehydratase small subunit from Methylorubrum extorquens (strain CM4 / NCIMB 13688) (Methylobacterium extorquens).